The primary structure comprises 363 residues: Somatostatin receptor type 5 (363 aa).

At 1–35 (MEPLSLASTPSWNASAASSGNHNWSLVGSASPMGA) the chain is on the extracellular side. Residues N13 and N23 are each glycosylated (N-linked (GlcNAc...) asparagine). A helical membrane pass occupies residues 36–63 (RAVLVPVLYLLVCTVGLSGNTLVIYVVL). Residues 64-73 (RHAKMKTVTN) are Cytoplasmic-facing. The chain crosses the membrane as a helical span at residues 74–99 (VYILNLAVADVLFMLGLPFLATQNAV). The Extracellular portion of the chain corresponds to 100–111 (VSYWPFGSFLCR). C110 and C185 are oxidised to a cystine. Residues 112 to 133 (LVMTLDGINQFTSIFCLMVMSV) traverse the membrane as a helical segment. The Cytoplasmic portion of the chain corresponds to 134 to 155 (DRYLAVVHPLRSARWRRPRVAK). Residues 156-176 (MASAAVWVFSLLMSLPLLVFA) form a helical membrane-spanning segment. Residues 177-196 (DVQEGWGTCNLSWPEPVGLW) are Extracellular-facing. N186 carries N-linked (GlcNAc...) asparagine glycosylation. A helical transmembrane segment spans residues 197 to 221 (GAAFITYTSVLGFFGPLLVICLCYL). The Cytoplasmic segment spans residues 222–247 (LIVVKVKAAGMRVGSSRRRRSEPKVT). A helical membrane pass occupies residues 248 to 273 (RMVVVVVLVFVGCWLPFFIVNIVNLA). Residues 274–283 (FTLPEEPTSA) are Extracellular-facing. Residues 284–308 (GLYFFVVVLSYANSCANPLLYGFLS) form a helical membrane-spanning segment. Residues 309-363 (DNFRQSFRKVLCLRRGYGMEDADAIEPRPDKSGRPQATLPTRSCEANGLMQTSRI) are Cytoplasmic-facing. C320 carries S-palmitoyl cysteine; by ZDHHC5 lipidation. Residues 331 to 363 (DAIEPRPDKSGRPQATLPTRSCEANGLMQTSRI) are disordered.

The protein belongs to the G-protein coupled receptor 1 family. In terms of assembly, heterodimer with SSTR2. Heterodimerization with SSTR2 increases cell growth inhibition activity of SSTR2. In terms of processing, palmitoylated at Cys-320 by ZDHHC5, but not ZDHHC8. Palmitoylation creates an additional intracellular loop which is thought to be important for efficient coupling to G-proteins and may target the protein to lipid rafts. As to expression, prominent in the pituitary and small intestine. Low levels in islets and spleen. Not detected in kidney, pancreas, cerebellum, or cortex.

The protein resides in the cell membrane. Its function is as follows. Receptor for somatostatin-28. The activity of this receptor is mediated by G proteins which inhibit adenylyl cyclase. Increases cell growth inhibition activity of SSTR2 following heterodimerization. This Rattus norvegicus (Rat) protein is Somatostatin receptor type 5 (Sstr5).